The following is a 392-amino-acid chain: Serpin B11 (392 aa).

An RCL region spans residues 341 to 365 (EEGTEAAAATGDSIAVKSLPMRAQF).

Belongs to the serpin family. Ov-serpin subfamily. In terms of tissue distribution, detected in a restricted number of tissues, including lung, placenta, prostate, and tonsil.

The protein localises to the cytoplasm. Functionally, has no serine protease inhibitory activity, probably due to variants in the scaffold impairing conformational change. This is Serpin B11 (SERPINB11) from Homo sapiens (Human).